A 207-amino-acid polypeptide reads, in one-letter code: Probable GTP-binding protein EngB (207 aa).

An EngB-type G domain is found at 24–199 (GGYEVAFAGR…RGIVGGWLGL (176 aa)). Residues 32-39 (GRSNAGKS), 59-63 (GRTQQ), 77-80 (DLPG), 144-147 (TKAD), and 178-180 (YSG) each bind GTP. Mg(2+)-binding residues include Ser-39 and Thr-61.

Belongs to the TRAFAC class TrmE-Era-EngA-EngB-Septin-like GTPase superfamily. EngB GTPase family. Requires Mg(2+) as cofactor.

Its function is as follows. Necessary for normal cell division and for the maintenance of normal septation. The sequence is that of Probable GTP-binding protein EngB from Xanthomonas campestris pv. campestris (strain 8004).